The primary structure comprises 269 residues: GRF-interacting factor 10 (269 aa).

The disordered stretch occupies residues 1 to 71; the sequence is MTAEGEAKNP…GEKDDGACRD (71 aa). A compositionally biased stretch (low complexity) spans 22-43; the sequence is QQAAPAPAPAQGEVAQEAAVQG. Basic and acidic residues predominate over residues 47 to 69; the sequence is EQERDKADREVQGGAGEKDDGAC. Residues 113 to 148 form the QLQ domain; that stretch reads AFTAMQLQELEQQSRVYQYMAARVPVPTHLVFPVWK. The region spanning 179–223 is the WRC domain; it reads EPEPGRCRRTDGKKWRCWRNTIPNEKYCERHMHRGRKRPVQVFLE. 2 consecutive short sequence motifs (bipartite nuclear localization signal) follow at residues 184 to 194 and 212 to 216; these read RCRRTDGKKWR and RGRKR. The segment at 217-269 is disordered; that stretch reads PVQVFLEDDEPDSASGSKPAAPGKATEGAKKADDKSPSSKKLAVAAPAAVQST. Residues 243–253 are compositionally biased toward basic and acidic residues; it reads EGAKKADDKSP.

Belongs to the GRF family. Interacts with GIF1. Highly expressed in shoots. Expressed in developing leaves.

Its subcellular location is the nucleus. Involved in the regulation of cell proliferation in developing shoots and leaves. Does not possess transactivation activity. This is GRF-interacting factor 10 from Zea mays (Maize).